Reading from the N-terminus, the 62-residue chain is MRNMVNKDQVAGLAKQLKGSVKQAAGKATGNRRTQAEGMADKVAGKVQKAYGDVKDKVKKAF.

A disordered region spans residues Met1–Lys42.

The protein belongs to the UPF0337 (CsbD) family.

This is UPF0337 protein mll8179 from Mesorhizobium japonicum (strain LMG 29417 / CECT 9101 / MAFF 303099) (Mesorhizobium loti (strain MAFF 303099)).